A 101-amino-acid chain; its full sequence is Urease subunit beta (101 aa).

This sequence belongs to the urease beta subunit family. In terms of assembly, heterotrimer of UreA (gamma), UreB (beta) and UreC (alpha) subunits. Three heterotrimers associate to form the active enzyme.

The protein resides in the cytoplasm. The catalysed reaction is urea + 2 H2O + H(+) = hydrogencarbonate + 2 NH4(+). It participates in nitrogen metabolism; urea degradation; CO(2) and NH(3) from urea (urease route): step 1/1. This is Urease subunit beta from Actinobacillus pleuropneumoniae serotype 7 (strain AP76).